The chain runs to 173 residues: uncharacterized protein (173 aa).

The N-acetyltransferase domain occupies 4 to 173; sequence VKIVQVSEKD…TDFLLKKALV (170 aa). Acetyl-CoA-binding positions include 97–99, 106–110, and 136–138; these read IYL, RGLGK, and NEN.

This is an uncharacterized protein from Lactobacillus delbrueckii subsp. lactis.